The following is a 449-amino-acid chain: Gamma-aminobutyric acid receptor subunit delta (449 aa).

Positions 1 to 24 are cleaved as a signal peptide; that stretch reads MDVLGWLLLPLLLLCTQPHHGARA. Over 25–251 the chain is Extracellular; that stretch reads MNDIGDYVGS…QLRRNRGVYI (227 aa). Residues Asn-103 and Asn-106 are each glycosylated (N-linked (GlcNAc...) asparagine). Cys-164 and Cys-178 are disulfide-bonded. A helical membrane pass occupies residues 252 to 271; it reads IQSYMPSVLLVAMSWVSFWI. Residues 272–275 are Cytoplasmic-facing; it reads SQAA. The chain crosses the membrane as a helical span at residues 276–298; it reads VPARVSLGITTVLTMTTLMVSAR. Over 299 to 308 the chain is Extracellular; sequence SSLPRASAIK. The chain crosses the membrane as a helical span at residues 309–331; the sequence is ALDVYFWICYVFVFAALVEYAFA. The Cytoplasmic portion of the chain corresponds to 332–423; it reads HFNADYRKKR…SRLKPIDADT (92 aa). Position 390 is a phosphoserine (Ser-390). A helical transmembrane segment spans residues 424–446; that stretch reads IDIYARAVFPAAFAAVNIIYWAA. Over 447–449 the chain is Extracellular; the sequence is YTM.

Belongs to the ligand-gated ion channel (TC 1.A.9) family. Gamma-aminobutyric acid receptor (TC 1.A.9.5) subfamily. GABRD sub-subfamily. As to quaternary structure, heteropentamer, formed by a combination of alpha (GABRA1-6), beta (GABRB1-3), gamma (GABRG1-3), delta (GABRD), epsilon (GABRE), rho (GABRR1-3), pi (GABRP) and theta (GABRQ) chains, each subunit exhibiting distinct physiological and pharmacological properties. As to expression, found in the brain, in cerebellar granule cells. Expressed in lungs, in alveolar epithelium.

Its subcellular location is the cell membrane. It carries out the reaction chloride(in) = chloride(out). Its function is as follows. Delta subunit of the heteropentameric ligand-gated chloride channel gated by gamma-aminobutyric acid (GABA), a major inhibitory neurotransmitter in the brain. GABA-gated chloride channels, also named GABA(A) receptors (GABAAR), consist of five subunits arranged around a central pore and contain GABA active binding site(s) located at the alpha and beta subunit interface(s). When activated by GABA, GABAARs selectively allow the flow of chloride anions across the cell membrane down their electrochemical gradient. GABAARs containing delta/GABRD subunits are predominantly expressed and located in extrasynaptic or perisynaptic positions on hippocampus and cerebellar granule cells, and contribute to the tonic GABAergic inhibition. GABAAR containing alpha-4-beta-3-delta subunits can simultaneously bind GABA and histamine where histamine binds at the interface of two neighboring beta subunits, which may be involved in the regulation of sleep and wakefulness. The sequence is that of Gamma-aminobutyric acid receptor subunit delta from Rattus norvegicus (Rat).